We begin with the raw amino-acid sequence, 274 residues long: uncharacterized protein (274 aa).

The disordered stretch occupies residues E235 to K274. A compositionally biased stretch (basic and acidic residues) spans Q241–K274.

This is an uncharacterized protein from Treponema pallidum (strain Nichols).